Consider the following 322-residue polypeptide: Phosphatidylserine decarboxylase proenzyme (322 aa).

Catalysis depends on charge relay system; for autoendoproteolytic cleavage activity residues D90, H147, and S254. Catalysis depends on S254, which acts as the Schiff-base intermediate with substrate; via pyruvic acid; for decarboxylase activity. S254 is modified (pyruvic acid (Ser); by autocatalysis).

The protein belongs to the phosphatidylserine decarboxylase family. PSD-B subfamily. Prokaryotic type I sub-subfamily. As to quaternary structure, heterodimer of a large membrane-associated beta subunit and a small pyruvoyl-containing alpha subunit. It depends on pyruvate as a cofactor. In terms of processing, is synthesized initially as an inactive proenzyme. Formation of the active enzyme involves a self-maturation process in which the active site pyruvoyl group is generated from an internal serine residue via an autocatalytic post-translational modification. Two non-identical subunits are generated from the proenzyme in this reaction, and the pyruvate is formed at the N-terminus of the alpha chain, which is derived from the carboxyl end of the proenzyme. The autoendoproteolytic cleavage occurs by a canonical serine protease mechanism, in which the side chain hydroxyl group of the serine supplies its oxygen atom to form the C-terminus of the beta chain, while the remainder of the serine residue undergoes an oxidative deamination to produce ammonia and the pyruvoyl prosthetic group on the alpha chain. During this reaction, the Ser that is part of the protease active site of the proenzyme becomes the pyruvoyl prosthetic group, which constitutes an essential element of the active site of the mature decarboxylase.

The protein localises to the cell membrane. It carries out the reaction a 1,2-diacyl-sn-glycero-3-phospho-L-serine + H(+) = a 1,2-diacyl-sn-glycero-3-phosphoethanolamine + CO2. It functions in the pathway phospholipid metabolism; phosphatidylethanolamine biosynthesis; phosphatidylethanolamine from CDP-diacylglycerol: step 2/2. In terms of biological role, catalyzes the formation of phosphatidylethanolamine (PtdEtn) from phosphatidylserine (PtdSer). The protein is Phosphatidylserine decarboxylase proenzyme of Shigella dysenteriae serotype 1 (strain Sd197).